A 529-amino-acid polypeptide reads, in one-letter code: Interleukin-21 receptor (529 aa).

Residues Met-1–Ser-19 form the signal peptide. 3 disulfides stabilise this stretch: Cys-20-Cys-109, Cys-25-Cys-35, and Cys-65-Cys-81. Over Cys-20–His-237 the chain is Extracellular. 2 Fibronectin type-III domains span residues Leu-21–Ile-118 and Lys-119–Gly-228. N-linked (GlcNAc...) asparagine glycosylation is found at Asn-73, Asn-97, Asn-104, Asn-125, and Asn-182. Trp-214 is a glycosylation site (C-linked (Man) tryptophan). Positions Trp-214 to Ser-218 match the WSXWS motif motif. A helical transmembrane segment spans residues Met-238–Leu-258. Residues Pro-259–Ser-529 are Cytoplasmic-facing. Positions Ile-266 to Glu-274 match the Box 1 motif motif. The tract at residues Thr-458 to Ser-529 is disordered.

Belongs to the type I cytokine receptor family. Type 4 subfamily. Heterodimer with the common gamma subunit. Associates with JAK1. In terms of processing, C-mannosylated at Trp-214 in the WSXWS motif, the sugar chain makes extensive hydrogen bonds with Asn-73 sugar, and bridges the two fibronectin domains transforming the V-shaped receptor into an A-frame. As to expression, selectively expressed in lymphoid tissues. Most highly expressed in thymus and spleen.

It localises to the membrane. This is a receptor for interleukin-21. In Mus musculus (Mouse), this protein is Interleukin-21 receptor (Il21r).